Consider the following 417-residue polypeptide: Serine hydroxymethyltransferase (417 aa).

Residues L121 and 125–127 each bind (6S)-5,6,7,8-tetrahydrofolate; that span reads GHL. Residue K229 is modified to N6-(pyridoxal phosphate)lysine. Residue 355 to 357 participates in (6S)-5,6,7,8-tetrahydrofolate binding; sequence SPF.

Belongs to the SHMT family. In terms of assembly, homodimer. Pyridoxal 5'-phosphate serves as cofactor.

It localises to the cytoplasm. It carries out the reaction (6R)-5,10-methylene-5,6,7,8-tetrahydrofolate + glycine + H2O = (6S)-5,6,7,8-tetrahydrofolate + L-serine. It participates in one-carbon metabolism; tetrahydrofolate interconversion. It functions in the pathway amino-acid biosynthesis; glycine biosynthesis; glycine from L-serine: step 1/1. Its function is as follows. Catalyzes the reversible interconversion of serine and glycine with tetrahydrofolate (THF) serving as the one-carbon carrier. This reaction serves as the major source of one-carbon groups required for the biosynthesis of purines, thymidylate, methionine, and other important biomolecules. Also exhibits THF-independent aldolase activity toward beta-hydroxyamino acids, producing glycine and aldehydes, via a retro-aldol mechanism. The sequence is that of Serine hydroxymethyltransferase from Shewanella sp. (strain ANA-3).